A 298-amino-acid chain; its full sequence is Cytochrome c oxidase subunit 2 (298 aa).

The signal sequence occupies residues 1–29; the sequence is MMAIATKRRGVAAVMSLGVATMTAVPALA. The residue at position 30 (Q30) is a Pyrrolidone carboxylic acid. Residues 30-55 lie on the Periplasmic side of the membrane; that stretch reads QDVLGDLPVIGKPVNGGMNFQPASSP. The helical transmembrane segment at 56 to 88 threads the bilayer; the sequence is LAHDQQWLDHFVLYIITAVTIFVCLLLLICIVR. The Cytoplasmic segment spans residues 89–103; sequence FNRRANPVPARFTHN. A helical membrane pass occupies residues 104-134; the sequence is TPIEVIWTLVPVLILVAIGAFSLPILFRSQE. The Periplasmic segment spans residues 135–280; it reads MPNDPDLVIK…WLAGAKEEFA (146 aa). H210, C245, E247, C249, H253, and M256 together coordinate Cu cation. Residues 281–298 constitute a propeptide, C-terminal propeptide; that stretch reads ADASDYLPASPVKLASAE.

Belongs to the cytochrome c oxidase subunit 2 family. Binuclear copper center (CuA) serves as cofactor.

The protein resides in the cell inner membrane. The catalysed reaction is 4 Fe(II)-[cytochrome c] + O2 + 8 H(+)(in) = 4 Fe(III)-[cytochrome c] + 2 H2O + 4 H(+)(out). Functionally, subunits I and II form the functional core of the enzyme complex. Electrons originating in cytochrome c are transferred via heme a and Cu(A) to the binuclear center formed by heme a3 and Cu(B). The sequence is that of Cytochrome c oxidase subunit 2 (ctaC) from Paracoccus denitrificans.